The following is a 372-amino-acid chain: N-acetylneuraminate-9-phosphate synthase (372 aa).

One can recognise an AFP-like domain in the interval 314 to 372 (SIVAARNLNKGYRLQLADMAIKVSEPSGLTAEDFLDLVGKELADNIGEDEPILGNSIIN).

The enzyme catalyses aldehydo-N-acetyl-D-mannosamine 6-phosphate + phosphoenolpyruvate + H2O = N-acetylneuraminate 9-phosphate + phosphate. It catalyses the reaction aldehydo-D-mannose 6-phosphate + phosphoenolpyruvate + H2O = 3-deoxy-D-glycero-beta-D-galacto-non-2-ulopyranosonate 9-phosphate + phosphate. Catalyzes the condensation of phosphoenolpyruvate (PEP) and N-acetylmannosamine 6-phosphate (ManNAc-6-P) or D-mannose 6-phosphate (Man-6-P) to generate the phosphorylated forms of both the sialic acids N-acetylneuraminic acid (Neu5Ac) and deaminoneuraminic acid (KDN), respectively. Essential for biosynthesis of sialic acids in neurons of the central nervous system. The polypeptide is N-acetylneuraminate-9-phosphate synthase (Drosophila melanogaster (Fruit fly)).